Here is a 334-residue protein sequence, read N- to C-terminus: Protein-methionine-sulfoxide reductase catalytic subunit MsrP (334 aa).

Positions 1-44 form a signal peptide, tat-type signal; the sequence is MKKNQFLKESDITAESVFFMKRRQVLKALGISAAALSLPHAAHA. Mo-molybdopterin-binding positions include asparagine 88, 91 to 92, cysteine 146, threonine 181, asparagine 233, arginine 238, and 249 to 251; these read YE and GIK.

It belongs to the MsrP family. In terms of assembly, heterodimer of a catalytic subunit (MsrP) and a heme-binding subunit (MsrQ). Mo-molybdopterin is required as a cofactor. Predicted to be exported by the Tat system. The position of the signal peptide cleavage has not been experimentally proven.

The protein resides in the periplasm. It catalyses the reaction L-methionyl-[protein] + a quinone + H2O = L-methionyl-(S)-S-oxide-[protein] + a quinol. The catalysed reaction is L-methionyl-[protein] + a quinone + H2O = L-methionyl-(R)-S-oxide-[protein] + a quinol. In terms of biological role, part of the MsrPQ system that repairs oxidized periplasmic proteins containing methionine sulfoxide residues (Met-O), using respiratory chain electrons. Thus protects these proteins from oxidative-stress damage caused by reactive species of oxygen and chlorine generated by the host defense mechanisms. MsrPQ is essential for the maintenance of envelope integrity under bleach stress, rescuing a wide series of structurally unrelated periplasmic proteins from methionine oxidation, including the primary periplasmic chaperone SurA and the lipoprotein Pal. The catalytic subunit MsrP is non-stereospecific, being able to reduce both (R-) and (S-) diastereoisomers of methionine sulfoxide. The protein is Protein-methionine-sulfoxide reductase catalytic subunit MsrP of Shigella dysenteriae serotype 1 (strain Sd197).